We begin with the raw amino-acid sequence, 313 residues long: Leucine-rich repeat-containing protein 52 (313 aa).

The signal sequence occupies residues 1–23 (MSLASGPGPGWLLFSFGMGLVSG). An LRRNT domain is found at 24 to 53 (SKCPNNCLCQAQEVICTGKQLTEYPLDIPL). At 24–244 (SKCPNNCLCQ…MCITHLDHKD (221 aa)) the chain is on the extracellular side. 2 disulfides stabilise this stretch: Cys26-Cys32 and Cys30-Cys39. LRR repeat units lie at residues 54 to 75 (NTRR…HLGL), 78 to 99 (DLVY…TFIG), 102 to 123 (KLIY…TFSV), 126 to 148 (NLVQ…TFAN), and 151 to 172 (SLRY…ALYH). 2 N-linked (GlcNAc...) asparagine glycosylation sites follow: Asn112 and Asn148. In terms of domain architecture, LRRCT spans 184–238 (NPWKCNCSFLDFAIFLIVFHMDPSDDLNATCVEPTELTGWPITRVGNPLRYMCIT). Disulfide bonds link Cys188–Cys214 and Cys190–Cys236. Residues Asn189 and Asn211 are each glycosylated (N-linked (GlcNAc...) asparagine). A helical transmembrane segment spans residues 245-265 (YIFLLLIGFCIFAAGTVAAWL). Residues 266 to 313 (TGVCAVLYQNTRHKSSEEDEDEAGTRVEVSRRIFQTQTSSVQEFPQLI) are Cytoplasmic-facing.

In terms of assembly, may interact with KCNU1; this interaction may be required for LRRC52 stability and may change the channel gating properties. Interacts with KCNMA1. N-glycosylated. In terms of tissue distribution, mainly expressed in testis and skeletal muscle.

Its subcellular location is the cell membrane. Functionally, auxiliary protein of the large-conductance, voltage and calcium-activated potassium channel (BK alpha). Modulates gating properties by producing a marked shift in the BK channel's voltage dependence of activation in the hyperpolarizing direction, and in the absence of calcium. KCNU1 channel auxiliary protein. Modulates KCNU1 gating properties. The protein is Leucine-rich repeat-containing protein 52 (LRRC52) of Homo sapiens (Human).